The chain runs to 284 residues: CBY1-interacting BAR domain-containing protein 1-A (284 aa).

A mitochondrion-targeting transit peptide spans 1 to 48; it reads MSQTPEARARDNQTRQIQESVNNVEKHFGELCQIFAGYVRKTARLRDK. Residues 11–221 form a BAR-like region; sequence DNQTRQIQES…DIDEEEDLEV (211 aa). 2 coiled-coil regions span residues 142–184 and 260–284; these read RQII…IKKL and NRQK…EDEN. The segment covering 242-261 has biased composition (polar residues); that stretch reads SRTGSTSRGPSVISQPPGNR. Residues 242–284 form a disordered region; sequence SRTGSTSRGPSVISQPPGNRQKNRIEDEDEEEEDDENSTEDEN. The span at 267-284 shows a compositional bias: acidic residues; that stretch reads EDEDEEEEDDENSTEDEN.

This sequence belongs to the CIBAR family.

It localises to the cytoplasm. The protein resides in the cytoskeleton. It is found in the microtubule organizing center. Its subcellular location is the centrosome. The protein localises to the centriole. It localises to the nucleus. The protein resides in the mitochondrion inner membrane. It is found in the cell projection. Its subcellular location is the cilium. The protein localises to the flagellum. In terms of biological role, plays a critical role in regulating mitochondrial ultrastructure and function by maintaining the integrity of mitochondrial morphology, particularly the organization of cristae. Plays a crucial role in ciliogenesis. Plays a key role in the correct positioning of the annulus, a septin-based ring structure in the sperm flagellum, serving both as a physical barrier and a membrane diffusion barrier that separates the midpiece (MP) from the principal piece (PP). This is CBY1-interacting BAR domain-containing protein 1-A from Xenopus laevis (African clawed frog).